A 354-amino-acid chain; its full sequence is 3'-hydroxy-N-methyl-(S)-coclaurine 4'-O-methyltransferase 1 (354 aa).

Aspartate 223 provides a ligand contact to S-adenosyl-L-methionine. Histidine 261 serves as the catalytic Proton acceptor.

The protein belongs to the class I-like SAM-binding methyltransferase superfamily. Cation-independent O-methyltransferase family. COMT subfamily. As to expression, expressed in roots, stems, leaves and flowers. Restricted to sieve elements of the phloem adjacent or proximal to laticifers.

The catalysed reaction is (S)-3'-hydroxy-N-methylcoclaurine + S-adenosyl-L-methionine = (S)-reticuline + S-adenosyl-L-homocysteine + H(+). The protein operates within alkaloid biosynthesis; (S)-reticuline biosynthesis; (S)-reticuline from (S)-norcoclaurine: step 4/4. Involved in the biosynthesis of benzylisoquinoline alkaloids. Catalyzes the transfer of the methyl group to the 4'-hydroxyl group of 3'-hydroxy-N-methylcoclaurine to form reticuline. Also involved in the papaverine biosynthesis. The chain is 3'-hydroxy-N-methyl-(S)-coclaurine 4'-O-methyltransferase 1 from Papaver somniferum (Opium poppy).